The primary structure comprises 163 residues: Transcription elongation factor GreA (163 aa).

The stretch at 45-65 forms a coiled coil; the sequence is NAEYHAAREKQAFIEARINEL.

The protein belongs to the GreA/GreB family.

In terms of biological role, necessary for efficient RNA polymerase transcription elongation past template-encoded arresting sites. The arresting sites in DNA have the property of trapping a certain fraction of elongating RNA polymerases that pass through, resulting in locked ternary complexes. Cleavage of the nascent transcript by cleavage factors such as GreA or GreB allows the resumption of elongation from the new 3'terminus. GreA releases sequences of 2 to 3 nucleotides. In Helicobacter hepaticus (strain ATCC 51449 / 3B1), this protein is Transcription elongation factor GreA.